The primary structure comprises 531 residues: Histone-arginine methyltransferase CARMER (531 aa).

The SAM-dependent MTase PRMT-type domain occupies Ala-141–His-450. S-adenosyl-L-methionine is bound by residues Gln-154, Arg-163, Gly-187, Glu-209, Glu-238, and Thr-266. Arg-501 carries the asymmetric dimethylarginine; by autocatalysis modification.

This sequence belongs to the class I-like SAM-binding methyltransferase superfamily. Protein arginine N-methyltransferase family. As to quaternary structure, homodimer. In terms of processing, the dimethylated protein is the major form.

Its subcellular location is the cytoplasm. The protein localises to the nucleus. It carries out the reaction L-arginyl-[protein] + 2 S-adenosyl-L-methionine = N(omega),N(omega)-dimethyl-L-arginyl-[protein] + 2 S-adenosyl-L-homocysteine + 2 H(+). Functionally, methylates (mono- and asymmetric dimethylation) the guanidino nitrogens of arginyl residues in proteins. May methylate histone H3 at 'Arg-17' and activate transcription via chromatin remodeling. The chain is Histone-arginine methyltransferase CARMER (Art4) from Drosophila ananassae (Fruit fly).